Consider the following 321-residue polypeptide: Ferredoxin--NADP reductase (321 aa).

Residues glutamate 33, glutamine 41, tyrosine 46, valine 86, leucine 119, aspartate 277, and serine 318 each coordinate FAD.

The protein belongs to the ferredoxin--NADP reductase type 2 family. Homodimer. It depends on FAD as a cofactor.

The enzyme catalyses 2 reduced [2Fe-2S]-[ferredoxin] + NADP(+) + H(+) = 2 oxidized [2Fe-2S]-[ferredoxin] + NADPH. The protein is Ferredoxin--NADP reductase of Lactococcus lactis subsp. cremoris (strain MG1363).